The chain runs to 482 residues: Catalase easC (482 aa).

His58 is a catalytic residue. Tyr347 is a binding site for heme.

It belongs to the catalase family. The cofactor is heme.

It participates in alkaloid biosynthesis; ergot alkaloid biosynthesis. Its function is as follows. Catalase; part of the gene cluster that mediates the biosynthesis of fungal ergot alkaloid. DmaW catalyzes the first step of ergot alkaloid biosynthesis by condensing dimethylallyl diphosphate (DMAP) and tryptophan to form 4-dimethylallyl-L-tryptophan. The second step is catalyzed by the methyltransferase easF that methylates 4-dimethylallyl-L-tryptophan in the presence of S-adenosyl-L-methionine, resulting in the formation of 4-dimethylallyl-L-abrine. The catalase easC and the FAD-dependent oxidoreductase easE then transform 4-dimethylallyl-L-abrine to chanoclavine-I which is further oxidized by easD in the presence of NAD(+), resulting in the formation of chanoclavine-I aldehyde. Chanoclavine-I aldehyde is the precursor of ergoamides and ergopeptines in Clavicipitaceae, and clavine-type alcaloids such as fumiclavine in Trichocomaceae. However, the metabolites downstream of chanoclavine-I aldehyde in Arthrodermataceae have not been identified yet. The polypeptide is Catalase easC (Arthroderma otae (strain ATCC MYA-4605 / CBS 113480) (Microsporum canis)).